The primary structure comprises 1085 residues: Toxin VasX (1085 aa).

The interval 1-20 (MSNPNQAAKTGQTNDAQNPA) is disordered. A run of 4 helical transmembrane segments spans residues 753–773 (ALGE…AISA), 813–833 (IALV…ESWG), 860–880 (IIFY…PSIA), and 884–904 (AGWM…GVIL).

It localises to the secreted. The protein resides in the host membrane. Its function is as follows. Toxin secreted by the type VI (T6SS) secretion system that acts on prokaryotic target cells. Acts in conjunction with VasW, an accessory protein to VasX, to compromise the inner membrane of prokaryotic target cells. This Vibrio cholerae serotype O1 (strain ATCC 39315 / El Tor Inaba N16961) protein is Toxin VasX.